The primary structure comprises 564 residues: NAC domain-containing protein 16 (564 aa).

In terms of domain architecture, NAC spans 16–166 (SAPGFRFHPT…YYALYKLYKK (151 aa)). A DNA-binding region spans residues 115-172 (VGLKKTLVFYRGRAPNGERTDWVMHEYTMDEEELGRCKNAKEYYALYKLYKKSGAGPK). The chain crosses the membrane as a helical span at residues 535–555 (FLLLSIMGALCAIFWVFKATV).

Expressed in roots, rosette leaves, shoot apex, stems and flowers.

It localises to the membrane. The protein localises to the nucleus. Its function is as follows. Transcriptional activator activated by proteolytic cleavage through regulated intramembrane proteolysis (RIP). Transcriptional activator that promotes leaf senescence by up-regulating senescence-associated genes in response to developmental and stress-induced senescence signals. Functions in salt and oxidative stress-responsive signaling pathways. Binds to the promoter of NAC029/NAP and NAC059/ORS1 genes. The chain is NAC domain-containing protein 16 from Arabidopsis thaliana (Mouse-ear cress).